The following is a 361-amino-acid chain: tRNA-specific 2-thiouridylase MnmA (361 aa).

Residues 11–18 (GMSGGVDS) and Met37 contribute to the ATP site. Positions 97–99 (NPD) are interaction with target base in tRNA. Residue Cys102 is the Nucleophile of the active site. Cysteines 102 and 199 form a disulfide. Gly126 lines the ATP pocket. Residues 149–151 (KDQ) form an interaction with tRNA region. Catalysis depends on Cys199, which acts as the Cysteine persulfide intermediate. The tract at residues 311 to 312 (RY) is interaction with tRNA.

This sequence belongs to the MnmA/TRMU family.

It is found in the cytoplasm. It carries out the reaction S-sulfanyl-L-cysteinyl-[protein] + uridine(34) in tRNA + AH2 + ATP = 2-thiouridine(34) in tRNA + L-cysteinyl-[protein] + A + AMP + diphosphate + H(+). Functionally, catalyzes the 2-thiolation of uridine at the wobble position (U34) of tRNA, leading to the formation of s(2)U34. The sequence is that of tRNA-specific 2-thiouridylase MnmA from Cupriavidus taiwanensis (strain DSM 17343 / BCRC 17206 / CCUG 44338 / CIP 107171 / LMG 19424 / R1) (Ralstonia taiwanensis (strain LMG 19424)).